The chain runs to 282 residues: HTH-type transcriptional activator RhaR (282 aa).

Residues 179–277 enclose the HTH araC/xylS-type domain; sequence DKLITALANS…GMTPSQWRHL (99 aa). 2 DNA-binding regions (H-T-H motif) span residues 196–217 and 244–267; these read DAFCQQEQCSERVLRQQFRAQT and ISEISMQCGFEDSNYFSVVFTRET.

In terms of assembly, binds DNA as a dimer.

Its subcellular location is the cytoplasm. Functionally, activates expression of the rhaSR operon in response to L-rhamnose. This is HTH-type transcriptional activator RhaR from Salmonella arizonae (strain ATCC BAA-731 / CDC346-86 / RSK2980).